A 414-amino-acid polypeptide reads, in one-letter code: Alanine--glyoxylate aminotransferase (414 aa).

The transit peptide at 1–23 (MFRMLAKASVTLGSRAASWVRNM) directs the protein to the mitochondrion. N6-(pyridoxal phosphate)lysine is present on Lys-231. Lys-247 carries the post-translational modification N6-acetyllysine; alternate. Lys-247 is subject to N6-succinyllysine; alternate. 2 positions are modified to N6-acetyllysine: Lys-256 and Lys-334. Position 382 (Arg-382) interacts with substrate. Positions 412-414 (NKL) match the Microbody targeting signal motif.

It belongs to the class-V pyridoxal-phosphate-dependent aminotransferase family. Homodimer. Pyridoxal 5'-phosphate serves as cofactor.

It is found in the peroxisome. It localises to the mitochondrion matrix. It carries out the reaction L-serine + pyruvate = 3-hydroxypyruvate + L-alanine. It catalyses the reaction glyoxylate + L-alanine = glycine + pyruvate. Catalyzes the transamination of glyoxylate to glycine and contributes to the glyoxylate detoxification. Functionally, catalyzes the transamination between L-serine and pyruvate and weakly contributes to gluconeogenesis from the L-serine metabolism. The polypeptide is Alanine--glyoxylate aminotransferase (Rattus norvegicus (Rat)).